Consider the following 100-residue polypeptide: Large ribosomal subunit protein bL28 (100 aa).

Belongs to the bacterial ribosomal protein bL28 family.

The sequence is that of Large ribosomal subunit protein bL28 from Ehrlichia ruminantium (strain Welgevonden).